A 212-amino-acid polypeptide reads, in one-letter code: Uracil phosphoribosyltransferase (212 aa).

Residues Arg-78, Arg-103, and 130-138 each bind 5-phospho-alpha-D-ribose 1-diphosphate; that span reads DPMLATGSS. Residues Ile-193 and 198-200 contribute to the uracil site; that span reads GDA. Asp-199 lines the 5-phospho-alpha-D-ribose 1-diphosphate pocket.

The protein belongs to the UPRTase family. It depends on Mg(2+) as a cofactor.

The catalysed reaction is UMP + diphosphate = 5-phospho-alpha-D-ribose 1-diphosphate + uracil. The protein operates within pyrimidine metabolism; UMP biosynthesis via salvage pathway; UMP from uracil: step 1/1. Its activity is regulated as follows. Allosterically activated by GTP. In terms of biological role, catalyzes the conversion of uracil and 5-phospho-alpha-D-ribose 1-diphosphate (PRPP) to UMP and diphosphate. This Pseudomonas fluorescens (strain ATCC BAA-477 / NRRL B-23932 / Pf-5) protein is Uracil phosphoribosyltransferase.